A 199-amino-acid chain; its full sequence is Large ribosomal subunit protein bL25 (199 aa).

The protein belongs to the bacterial ribosomal protein bL25 family. CTC subfamily. As to quaternary structure, part of the 50S ribosomal subunit; part of the 5S rRNA/L5/L18/L25 subcomplex. Contacts the 5S rRNA. Binds to the 5S rRNA independently of L5 and L18.

Functionally, this is one of the proteins that binds to the 5S RNA in the ribosome where it forms part of the central protuberance. The chain is Large ribosomal subunit protein bL25 from Herpetosiphon aurantiacus (strain ATCC 23779 / DSM 785 / 114-95).